The chain runs to 190 residues: Orotate phosphoribosyltransferase (190 aa).

E114–S122 contacts 5-phospho-alpha-D-ribose 1-diphosphate. The orotate site is built by T118 and R146.

Belongs to the purine/pyrimidine phosphoribosyltransferase family. PyrE subfamily. As to quaternary structure, homodimer. Mg(2+) serves as cofactor.

The enzyme catalyses orotidine 5'-phosphate + diphosphate = orotate + 5-phospho-alpha-D-ribose 1-diphosphate. It participates in pyrimidine metabolism; UMP biosynthesis via de novo pathway; UMP from orotate: step 1/2. Functionally, catalyzes the transfer of a ribosyl phosphate group from 5-phosphoribose 1-diphosphate to orotate, leading to the formation of orotidine monophosphate (OMP). This is Orotate phosphoribosyltransferase from Caldicellulosiruptor bescii (strain ATCC BAA-1888 / DSM 6725 / KCTC 15123 / Z-1320) (Anaerocellum thermophilum).